The primary structure comprises 541 residues: Chaperonin GroEL (541 aa).

ATP-binding positions include 29–32, 86–90, Gly-413, 476–478, and Asp-492; these read TLGP, DGTTT, and NAA.

The protein belongs to the chaperonin (HSP60) family. As to quaternary structure, forms a cylinder of 14 subunits composed of two heptameric rings stacked back-to-back. Interacts with the co-chaperonin GroES.

It is found in the cytoplasm. The enzyme catalyses ATP + H2O + a folded polypeptide = ADP + phosphate + an unfolded polypeptide.. Together with its co-chaperonin GroES, plays an essential role in assisting protein folding. The GroEL-GroES system forms a nano-cage that allows encapsulation of the non-native substrate proteins and provides a physical environment optimized to promote and accelerate protein folding. This Streptococcus equi subsp. zooepidemicus (strain MGCS10565) protein is Chaperonin GroEL.